We begin with the raw amino-acid sequence, 584 residues long: Alpha-glucosidase MAL32 (584 aa).

The active-site Nucleophile is the Asp-214. Glu-276 functions as the Proton donor in the catalytic mechanism.

It belongs to the glycosyl hydrolase 13 family.

The catalysed reaction is Hydrolysis of terminal, non-reducing (1-&gt;4)-linked alpha-D-glucose residues with release of alpha-D-glucose.. The protein is Alpha-glucosidase MAL32 (MAL32) of Saccharomyces cerevisiae (strain ATCC 204508 / S288c) (Baker's yeast).